The following is a 269-amino-acid chain: Glutamate 5-kinase 2 (269 aa).

Lysine 16 lines the ATP pocket. 3 residues coordinate substrate: serine 57, aspartate 144, and asparagine 156. 218–224 (SGGMISK) contacts ATP.

It belongs to the glutamate 5-kinase family.

It is found in the cytoplasm. It carries out the reaction L-glutamate + ATP = L-glutamyl 5-phosphate + ADP. The protein operates within amino-acid biosynthesis; L-proline biosynthesis; L-glutamate 5-semialdehyde from L-glutamate: step 1/2. Functionally, catalyzes the transfer of a phosphate group to glutamate to form L-glutamate 5-phosphate. The chain is Glutamate 5-kinase 2 from Rhizobium meliloti (strain 1021) (Ensifer meliloti).